Here is a 253-residue protein sequence, read N- to C-terminus: Probable transcriptional regulatory protein AM1_1847 (253 aa).

The protein belongs to the TACO1 family.

It localises to the cytoplasm. This Acaryochloris marina (strain MBIC 11017) protein is Probable transcriptional regulatory protein AM1_1847.